The following is a 314-amino-acid chain: MANPERSYLSRFFSSQFSKLPYPSQSFKDAVILVTGGNTGLGLEAARHFVRLQAATVILAVRDLKKGEQAKLSIEESTKVQGVVEVWQVDLEDVRSVQSLAAKASSLPRLDVVVANAGISTNKWALVGDMERTIQVNVLSTFLLILALLPKMQEQDIEGQIRARPRVVVVSSEGHETTAFAERKAARIFDALRDQRQANMDERYDTSKLIQLYLVRALAERLSRSDKPPVTLNAVSPGLCKTGLLRETPLVARLLTGPVMAILARNAEEGSRTLVHAAAANDGETNGKYLRDYLQRLYAAKKATPRRRDCCRSF.

The NADP(+) site is built by Leu-41, Lys-66, Asp-90, and Asn-116. Active-site proton donor residues include Ser-171 and Tyr-204. NADP(+) is bound by residues Tyr-204 and Lys-208. The Lowers pKa of active site Tyr role is filled by Lys-208.

Belongs to the short-chain dehydrogenases/reductases (SDR) family.

Its pathway is secondary metabolite biosynthesis. Short chain dehydrogenase; part of the gene cluster that mediates the biosynthesis of aspercryptins, linear lipopeptides built from six amino acids including 2 highly unusual and nonproteogenic amino acids, 2-amino-octanoic acid (2aoa) and 2-amino-dodecanol (2adol). The core structure of aspercryptins is as follows: Ser/Ala-Thr-Ile/Val-2aoa-Asn-2adol. The first step of aspercryptin biosynthesis is the generation of the fatty acid precursors, octanoic and dodecanoic acids, by the FAS subunits atnF and atnM. The fatty acid precursors are likely transformed into the corresponding alpha-amino fatty acids in three steps. First, they are hydroxylated by the cytochrome P450 monooxygenase atnE, then oxidized to the corresponding alpha-keto acids by the NAD(P)-dependent oxidoreductase atnD, and finally converted to the alpha-amino fatty acids by the PLP-dependent aminotransferases atnH or atnJ. the alpha-amino fatty acids, 2-amino-octanoic and 2-amino-dodecanoic acids, are recognized, activated, and covalently tethered to the NRPS atnA by its fourth and sixth adenylation domains. The second module of atnA is the Thr module and contains an epimerase (E) domain responsible for the epimerization of Thr to D-allo-Thr. Additionally, despite atnA having only one epimerase domain, the first amino acid of aspercryptin A1 is D-Ser, suggesting that serine is either loaded directly as D-Ser on the first module or that the epimerase domain in the threonine module epimerizes both L-Ser and L-Thr. After condensation of the hexapeptide of aspercryptin, the C-terminal reductase (TE) domain might be involved in the reductive release and production of the aldehyde hexapeptide. Further reduction would generate aspercryptins. The variety of aspercryptins produced reflects the flexibility of the atnA NRPS, allowing incorporation of alanine instead of serine, valine for isoleucine, and a C10 fatty amino alcohol instead of the C12 version. AtnB seems to be involved in the selectivity for Ile versus Val by the third module. Moreover, type B, C and D aspercryptins have an additional N-terminal cichorine, acetyl and propionyl group respectively. The protein is Short chain dehydrogenase atnD of Emericella nidulans (strain FGSC A4 / ATCC 38163 / CBS 112.46 / NRRL 194 / M139) (Aspergillus nidulans).